A 770-amino-acid polypeptide reads, in one-letter code: NAD-dependent malic enzyme (770 aa).

The malic enzyme stretch occupies residues 1-440; that stretch reads MNTGDKAKSQ…KLNRFVFRSG (440 aa). Catalysis depends on K107, which acts as the Proton acceptor. A divalent metal cation contacts are provided by E149 and D150. The NAD(+) site is built by D175 and N300. The interval 441–770 is phosphate acetyltransferase; the sequence is FIMKPVFAAA…LAVVESSHPV (330 aa).

In the N-terminal section; belongs to the malic enzymes family. The protein in the C-terminal section; belongs to the phosphate acetyltransferase and butyryltransferase family. As to quaternary structure, homooctamer. It depends on Mg(2+) as a cofactor. The cofactor is Mn(2+).

It catalyses the reaction (S)-malate + NAD(+) = pyruvate + CO2 + NADH. Subject to substrate inhibition and shows allosteric regulation by acetyl-CoA. In terms of biological role, required for symbiotic nitrogen fixation. Plays a key role in the conversion of malate to acetyl-CoA for efficient tricarboxylic acid cycle function in nitrogen-fixating bacteria. The protein is NAD-dependent malic enzyme (dme) of Rhizobium meliloti (strain 1021) (Ensifer meliloti).